Consider the following 227-residue polypeptide: Phosphoribosylformylglycinamidine synthase subunit PurQ (227 aa).

In terms of domain architecture, Glutamine amidotransferase type-1 spans 3 to 225 (FAVIVLPGSN…VKNWRDTHVT (223 aa)). The active-site Nucleophile is Cys86. Active-site residues include His194 and Glu196.

Part of the FGAM synthase complex composed of 1 PurL, 1 PurQ and 2 PurS subunits.

It is found in the cytoplasm. It catalyses the reaction N(2)-formyl-N(1)-(5-phospho-beta-D-ribosyl)glycinamide + L-glutamine + ATP + H2O = 2-formamido-N(1)-(5-O-phospho-beta-D-ribosyl)acetamidine + L-glutamate + ADP + phosphate + H(+). The enzyme catalyses L-glutamine + H2O = L-glutamate + NH4(+). Its pathway is purine metabolism; IMP biosynthesis via de novo pathway; 5-amino-1-(5-phospho-D-ribosyl)imidazole from N(2)-formyl-N(1)-(5-phospho-D-ribosyl)glycinamide: step 1/2. Part of the phosphoribosylformylglycinamidine synthase complex involved in the purines biosynthetic pathway. Catalyzes the ATP-dependent conversion of formylglycinamide ribonucleotide (FGAR) and glutamine to yield formylglycinamidine ribonucleotide (FGAM) and glutamate. The FGAM synthase complex is composed of three subunits. PurQ produces an ammonia molecule by converting glutamine to glutamate. PurL transfers the ammonia molecule to FGAR to form FGAM in an ATP-dependent manner. PurS interacts with PurQ and PurL and is thought to assist in the transfer of the ammonia molecule from PurQ to PurL. In Bacillus pumilus (strain SAFR-032), this protein is Phosphoribosylformylglycinamidine synthase subunit PurQ.